We begin with the raw amino-acid sequence, 329 residues long: Calponin-3 (329 aa).

Lys23 carries the post-translational modification N6-acetyllysine. Residues 26–130 (HQAEEDLRNW…TLVALAGLAK (105 aa)) enclose the Calponin-homology (CH) domain. Lys158 is subject to N6-methyllysine. 3 Calponin-like repeats span residues 164–189 (IGLQ…RHLY), 204–229 (ISLQ…RDIY), and 243–268 (ISLQ…RQVY). The segment at 279–329 (PVIHNGSQGTGTNGSEISDSDYQAEYPDEYHGEYQDDYPRDYQYSDQGIDY) is disordered. Residues 306–318 (DEYHGEYQDDYPR) show a composition bias toward basic and acidic residues. Ser323 carries the post-translational modification Phosphoserine.

It belongs to the calponin family. In terms of tissue distribution, expressed in both non-smooth muscle tissues as well as smooth muscle tissues.

In terms of biological role, thin filament-associated protein that is implicated in the regulation and modulation of smooth muscle contraction. It is capable of binding to actin, calmodulin and tropomyosin. The interaction of calponin with actin inhibits the actomyosin Mg-ATPase activity. The polypeptide is Calponin-3 (CNN3) (Homo sapiens (Human)).